Consider the following 78-residue polypeptide: Toxin-like protein 10 (78 aa).

An N-terminal signal peptide occupies residues 1-23; the sequence is MKATALLIAVFILFSVFGDMGYC.

Post-translationally, contains 4 disulfide bonds. As to expression, expressed by the venom gland.

Its subcellular location is the secreted. The polypeptide is Toxin-like protein 10 (Urodacus yaschenkoi (Inland robust scorpion)).